Reading from the N-terminus, the 377-residue chain is Protein-arginine rhamnosyltransferase (377 aa).

Residue Tyr15 participates in dTDP-beta-L-rhamnose binding. Catalysis depends on Asp17, which acts as the Proton acceptor. Residues Tyr193, Gln255, and 271–275 contribute to the dTDP-beta-L-rhamnose site; that span reads RGEDS. Glu273 is an active-site residue.

This sequence belongs to the glycosyltransferase 104 family.

It catalyses the reaction dTDP-beta-L-rhamnose + L-arginyl-[protein] = N(omega)-(alpha-L-rhamnosyl)-L-arginyl-[protein] + dTDP + H(+). Its function is as follows. Protein-arginine rhamnosyltransferase that catalyzes the transfer of a single rhamnose to elongation factor P (EF-P) on 'Lys-32', a modification required for EF-P-dependent rescue of polyproline stalled ribosomes. This chain is Protein-arginine rhamnosyltransferase, found in Pseudomonas putida (strain ATCC 47054 / DSM 6125 / CFBP 8728 / NCIMB 11950 / KT2440).